A 229-amino-acid polypeptide reads, in one-letter code: Growth factor receptor-bound protein 2 (229 aa).

SH3 domains are found at residues 1 to 58 and 168 to 227; these read MEAV…MKPH and QQPT…PVNR. The SH2 domain maps to 60-171; it reads WFFGKIPRAK…RATNLLQQPT (112 aa).

It is found in the nucleus. Its subcellular location is the cytoplasm. It localises to the endosome. The protein localises to the golgi apparatus. In terms of biological role, adapter protein that provides a critical link between cell surface growth factor receptors and the Ras signaling pathway. Promotes meiotic reinitiation during oocyte maturation. In Xenopus tropicalis (Western clawed frog), this protein is Growth factor receptor-bound protein 2.